Reading from the N-terminus, the 396-residue chain is Elongation factor Tu (396 aa).

The tr-type G domain occupies 10 to 206; it reads KPHVNIGTIG…AVDAYIPEPE (197 aa). Residues 19 to 26 form a G1 region; the sequence is GHVDHGKT. Residue 19–26 coordinates GTP; it reads GHVDHGKT. Position 26 (T26) interacts with Mg(2+). The segment at 60-64 is G2; that stretch reads GITIA. Residues 81-84 are G3; that stretch reads DCPG. Residues 81-85 and 136-139 contribute to the GTP site; these read DCPGH and NKAD. The segment at 136-139 is G4; that stretch reads NKAD. The G5 stretch occupies residues 174 to 176; it reads SAL.

It belongs to the TRAFAC class translation factor GTPase superfamily. Classic translation factor GTPase family. EF-Tu/EF-1A subfamily. As to quaternary structure, monomer.

The protein localises to the cytoplasm. It catalyses the reaction GTP + H2O = GDP + phosphate + H(+). Functionally, GTP hydrolase that promotes the GTP-dependent binding of aminoacyl-tRNA to the A-site of ribosomes during protein biosynthesis. This Geobacter metallireducens (strain ATCC 53774 / DSM 7210 / GS-15) protein is Elongation factor Tu.